The sequence spans 238 residues: Ubiquinone biosynthesis O-methyltransferase (238 aa).

S-adenosyl-L-methionine-binding residues include Arg-36, Gly-56, Asp-77, and Met-125.

This sequence belongs to the methyltransferase superfamily. UbiG/COQ3 family.

The enzyme catalyses a 3-demethylubiquinol + S-adenosyl-L-methionine = a ubiquinol + S-adenosyl-L-homocysteine + H(+). It catalyses the reaction a 3-(all-trans-polyprenyl)benzene-1,2-diol + S-adenosyl-L-methionine = a 2-methoxy-6-(all-trans-polyprenyl)phenol + S-adenosyl-L-homocysteine + H(+). It functions in the pathway cofactor biosynthesis; ubiquinone biosynthesis. Its function is as follows. O-methyltransferase that catalyzes the 2 O-methylation steps in the ubiquinone biosynthetic pathway. In Histophilus somni (strain 2336) (Haemophilus somnus), this protein is Ubiquinone biosynthesis O-methyltransferase.